The primary structure comprises 886 residues: Peptidyl-lysine N-acetyltransferase Pat (886 aa).

The ATP-grasp domain occupies Gln487–Lys523. Ala513–Leu524 contacts ATP. Residues Cys726–Ala881 form the N-acetyltransferase domain.

It in the N-terminal section; belongs to the acetate CoA ligase alpha subunit family. This sequence in the central section; belongs to the acetate CoA ligase beta subunit family. In terms of assembly, monomer in the absence of acetyl-CoA. Oligomerizes to a tetrameric form in the presence of acetyl-CoA.

It carries out the reaction L-lysyl-[protein] + acetyl-CoA = N(6)-acetyl-L-lysyl-[protein] + CoA + H(+). Exhibits positive cooperativity. It may be the result of acetyl-CoA binding to two distinct sites, or the result of subunit interactions. In terms of biological role, acetylates and inactivates the acetyl-CoA synthase (Acs). Can also acetylate other central metabolic enzymes in response to environmental changes. The polypeptide is Peptidyl-lysine N-acetyltransferase Pat (pat) (Salmonella typhimurium (strain LT2 / SGSC1412 / ATCC 700720)).